An 86-amino-acid polypeptide reads, in one-letter code: Large ribosomal subunit protein uL23 (86 aa).

Belongs to the universal ribosomal protein uL23 family. As to quaternary structure, part of the 50S ribosomal subunit. Contacts protein L29.

Its function is as follows. Binds to 23S rRNA. One of the proteins that surrounds the polypeptide exit tunnel on the outside of the ribosome. This is Large ribosomal subunit protein uL23 from Thermococcus kodakarensis (strain ATCC BAA-918 / JCM 12380 / KOD1) (Pyrococcus kodakaraensis (strain KOD1)).